We begin with the raw amino-acid sequence, 127 residues long: Large ribosomal subunit protein bL20 (127 aa).

This sequence belongs to the bacterial ribosomal protein bL20 family.

Its function is as follows. Binds directly to 23S ribosomal RNA and is necessary for the in vitro assembly process of the 50S ribosomal subunit. It is not involved in the protein synthesizing functions of that subunit. The polypeptide is Large ribosomal subunit protein bL20 (Corynebacterium urealyticum (strain ATCC 43042 / DSM 7109)).